The chain runs to 370 residues: 3-isopropylmalate dehydrogenase (370 aa).

Residue 77 to 90 (GPKWDSVPYEVRPE) participates in NAD(+) binding. Positions 97, 107, 135, and 226 each coordinate substrate. Residues Asp226, Asp250, and Asp254 each contribute to the Mg(2+) site. Position 290–302 (290–302 (GSAPDIAGKGIAN)) interacts with NAD(+).

It belongs to the isocitrate and isopropylmalate dehydrogenases family. LeuB type 1 subfamily. In terms of assembly, homodimer. Mg(2+) serves as cofactor. Mn(2+) is required as a cofactor.

Its subcellular location is the cytoplasm. The enzyme catalyses (2R,3S)-3-isopropylmalate + NAD(+) = 4-methyl-2-oxopentanoate + CO2 + NADH. The protein operates within amino-acid biosynthesis; L-leucine biosynthesis; L-leucine from 3-methyl-2-oxobutanoate: step 3/4. Its function is as follows. Catalyzes the oxidation of 3-carboxy-2-hydroxy-4-methylpentanoate (3-isopropylmalate) to 3-carboxy-4-methyl-2-oxopentanoate. The product decarboxylates to 4-methyl-2 oxopentanoate. The chain is 3-isopropylmalate dehydrogenase from Rhizobium johnstonii (strain DSM 114642 / LMG 32736 / 3841) (Rhizobium leguminosarum bv. viciae).